A 428-amino-acid polypeptide reads, in one-letter code: Nucleotidyltransferase MB21D2 (428 aa).

The disordered stretch occupies residues 366 to 389 (QRRGSTTSIPSPQSDGGDPNQPDD). The segment covering 368-379 (RGSTTSIPSPQS) has biased composition (polar residues). Residue Thr372 is modified to Phosphothreonine. Ser373, Ser376, and Ser379 each carry phosphoserine.

The protein belongs to the mab-21 family.

Functionally, probable nucleotidyltransferase that catalyzes the formation of cyclic dinucleotide second messenger in response to some unknown stimulus. The chain is Nucleotidyltransferase MB21D2 from Mus musculus (Mouse).